The sequence spans 466 residues: Soluble pyridine nucleotide transhydrogenase (466 aa).

Residue 36–45 coordinates FAD; sequence EKESSVGGGC.

It belongs to the class-I pyridine nucleotide-disulfide oxidoreductase family. FAD serves as cofactor.

It is found in the cytoplasm. It catalyses the reaction NAD(+) + NADPH = NADH + NADP(+). Its function is as follows. Conversion of NADPH, generated by peripheral catabolic pathways, to NADH, which can enter the respiratory chain for energy generation. The chain is Soluble pyridine nucleotide transhydrogenase from Vibrio atlanticus (strain LGP32) (Vibrio splendidus (strain Mel32)).